Reading from the N-terminus, the 510-residue chain is ATP synthase subunit alpha (510 aa).

169 to 176 (GDRQTGKT) contacts ATP.

It belongs to the ATPase alpha/beta chains family. F-type ATPases have 2 components, CF(1) - the catalytic core - and CF(0) - the membrane proton channel. CF(1) has five subunits: alpha(3), beta(3), gamma(1), delta(1), epsilon(1). CF(0) has three main subunits: a(1), b(2) and c(9-12). The alpha and beta chains form an alternating ring which encloses part of the gamma chain. CF(1) is attached to CF(0) by a central stalk formed by the gamma and epsilon chains, while a peripheral stalk is formed by the delta and b chains.

Its subcellular location is the cell inner membrane. The enzyme catalyses ATP + H2O + 4 H(+)(in) = ADP + phosphate + 5 H(+)(out). Its function is as follows. Produces ATP from ADP in the presence of a proton gradient across the membrane. The alpha chain is a regulatory subunit. The chain is ATP synthase subunit alpha from Rickettsia peacockii (strain Rustic).